A 145-amino-acid polypeptide reads, in one-letter code: 3-hydroxyacyl-[acyl-carrier-protein] dehydratase FabZ (145 aa).

H48 is a catalytic residue.

It belongs to the thioester dehydratase family. FabZ subfamily.

The protein localises to the cytoplasm. The enzyme catalyses a (3R)-hydroxyacyl-[ACP] = a (2E)-enoyl-[ACP] + H2O. Functionally, involved in unsaturated fatty acids biosynthesis. Catalyzes the dehydration of short chain beta-hydroxyacyl-ACPs and long chain saturated and unsaturated beta-hydroxyacyl-ACPs. The protein is 3-hydroxyacyl-[acyl-carrier-protein] dehydratase FabZ of Geobacillus thermodenitrificans (strain NG80-2).